The following is a 653-amino-acid chain: Structural protein ORF653 (653 aa).

Residues 300–330 (AKEETKQETKQETGKEEEEKKETKQESQEQL) are a coiled coil. A compositionally biased stretch (basic and acidic residues) spans 302 to 326 (EETKQETKQETGKEEEEKKETKQES). Disordered regions lie at residues 302–329 (EETK…SQEQ), 344–388 (GQPA…ENTP), and 626–653 (AGQQ…VKLS). Low complexity predominate over residues 371–381 (EENNAEAPQQR). Residues 505–649 (KEQELYKELD…EEEEEEGNDT (145 aa)) are a coiled coil. Acidic residues predominate over residues 630–647 (EETDETTEEEEEEEEEGN).

It is found in the virion. In Acidianus two-tailed virus (ATV), this protein is Structural protein ORF653.